The primary structure comprises 572 residues: EF-hand calcium-binding domain-containing protein 12 (572 aa).

2 disordered regions span residues 62–85 (VPRKEDQTPLNPASQPQAPPKPIP) and 146–169 (EQSAQPNASQATTRTTRKKAPRLS). The region spanning 196–231 (SRKIKILEIFHKVGQGENQRITREEFIAAVKAVGVP) is the EF-hand domain. Ca(2+) is bound at residue E212.

This is EF-hand calcium-binding domain-containing protein 12 (EFCAB12) from Homo sapiens (Human).